A 460-amino-acid polypeptide reads, in one-letter code: Argininosuccinate lyase (460 aa).

The protein belongs to the lyase 1 family. Argininosuccinate lyase subfamily.

The protein resides in the cytoplasm. It catalyses the reaction 2-(N(omega)-L-arginino)succinate = fumarate + L-arginine. Its pathway is amino-acid biosynthesis; L-arginine biosynthesis; L-arginine from L-ornithine and carbamoyl phosphate: step 3/3. This is Argininosuccinate lyase from Streptococcus mutans serotype c (strain ATCC 700610 / UA159).